Reading from the N-terminus, the 494-residue chain is Guanosine-5'-triphosphate,3'-diphosphate pyrophosphatase (494 aa).

Belongs to the GppA/Ppx family. GppA subfamily.

It carries out the reaction guanosine 3'-diphosphate 5'-triphosphate + H2O = guanosine 3',5'-bis(diphosphate) + phosphate + H(+). Its pathway is purine metabolism; ppGpp biosynthesis; ppGpp from GTP: step 2/2. Catalyzes the conversion of pppGpp to ppGpp. Guanosine pentaphosphate (pppGpp) is a cytoplasmic signaling molecule which together with ppGpp controls the 'stringent response', an adaptive process that allows bacteria to respond to amino acid starvation, resulting in the coordinated regulation of numerous cellular activities. In Shigella flexneri serotype 5b (strain 8401), this protein is Guanosine-5'-triphosphate,3'-diphosphate pyrophosphatase.